A 483-amino-acid polypeptide reads, in one-letter code: Glycogen synthase (483 aa).

K15 is an ADP-alpha-D-glucose binding site.

This sequence belongs to the glycosyltransferase 1 family. Bacterial/plant glycogen synthase subfamily.

It carries out the reaction [(1-&gt;4)-alpha-D-glucosyl](n) + ADP-alpha-D-glucose = [(1-&gt;4)-alpha-D-glucosyl](n+1) + ADP + H(+). It functions in the pathway glycan biosynthesis; glycogen biosynthesis. Functionally, synthesizes alpha-1,4-glucan chains using ADP-glucose. The protein is Glycogen synthase of Exiguobacterium sibiricum (strain DSM 17290 / CCUG 55495 / CIP 109462 / JCM 13490 / 255-15).